A 216-amino-acid chain; its full sequence is Protein fmp32, mitochondrial (216 aa).

A coiled-coil region spans residues 111–133 (RQEMVALHSQVEQLFSDVERLKT). A helical transmembrane segment spans residues 193–215 (TLQWVFGIVTGSGALLLAYVRLI).

The protein belongs to the CCDC90 family.

It localises to the mitochondrion. The protein resides in the membrane. The chain is Protein fmp32, mitochondrial (fmp32) from Schizosaccharomyces pombe (strain 972 / ATCC 24843) (Fission yeast).